The following is a 308-amino-acid chain: tRNA pseudouridine synthase B (308 aa).

The Nucleophile role is filled by D47.

The protein belongs to the pseudouridine synthase TruB family. Type 1 subfamily.

The enzyme catalyses uridine(55) in tRNA = pseudouridine(55) in tRNA. Its function is as follows. Responsible for synthesis of pseudouridine from uracil-55 in the psi GC loop of transfer RNAs. This Rhodospirillum rubrum (strain ATCC 11170 / ATH 1.1.1 / DSM 467 / LMG 4362 / NCIMB 8255 / S1) protein is tRNA pseudouridine synthase B.